We begin with the raw amino-acid sequence, 122 residues long: Large ribosomal subunit protein uL14 (122 aa).

It belongs to the universal ribosomal protein uL14 family. As to quaternary structure, part of the 50S ribosomal subunit. Forms a cluster with proteins L3 and L19. In the 70S ribosome, L14 and L19 interact and together make contacts with the 16S rRNA in bridges B5 and B8.

Its function is as follows. Binds to 23S rRNA. Forms part of two intersubunit bridges in the 70S ribosome. The sequence is that of Large ribosomal subunit protein uL14 from Thiobacillus denitrificans (strain ATCC 25259 / T1).